Here is a 134-residue protein sequence, read N- to C-terminus: Cytochrome b (134 aa).

The next 3 helical transmembrane spans lie at 33–53 (FGSL…FLAM), 77–98 (WLLR…YLHV), and 113–133 (WNIG…GYVL). Heme b-binding residues include His83 and His97.

Belongs to the cytochrome b family. As to quaternary structure, the cytochrome bc1 complex contains 11 subunits: 3 respiratory subunits (MT-CYB, CYC1 and UQCRFS1), 2 core proteins (UQCRC1 and UQCRC2) and 6 low-molecular weight proteins (UQCRH/QCR6, UQCRB/QCR7, UQCRQ/QCR8, UQCR10/QCR9, UQCR11/QCR10 and a cleavage product of UQCRFS1). This cytochrome bc1 complex then forms a dimer. It depends on heme b as a cofactor.

It is found in the mitochondrion inner membrane. Functionally, component of the ubiquinol-cytochrome c reductase complex (complex III or cytochrome b-c1 complex) that is part of the mitochondrial respiratory chain. The b-c1 complex mediates electron transfer from ubiquinol to cytochrome c. Contributes to the generation of a proton gradient across the mitochondrial membrane that is then used for ATP synthesis. The chain is Cytochrome b (MT-CYB) from Chiroderma salvini (Salvin's big-eyed bat).